We begin with the raw amino-acid sequence, 180 residues long: Large ribosomal subunit protein uL5 (180 aa).

This sequence belongs to the universal ribosomal protein uL5 family. As to quaternary structure, part of the 50S ribosomal subunit; part of the 5S rRNA/L5/L18/L25 subcomplex. Contacts the 5S rRNA and the P site tRNA. Forms a bridge to the 30S subunit in the 70S ribosome.

This is one of the proteins that bind and probably mediate the attachment of the 5S RNA into the large ribosomal subunit, where it forms part of the central protuberance. In the 70S ribosome it contacts protein S13 of the 30S subunit (bridge B1b), connecting the 2 subunits; this bridge is implicated in subunit movement. Contacts the P site tRNA; the 5S rRNA and some of its associated proteins might help stabilize positioning of ribosome-bound tRNAs. The polypeptide is Large ribosomal subunit protein uL5 (Cupriavidus metallidurans (strain ATCC 43123 / DSM 2839 / NBRC 102507 / CH34) (Ralstonia metallidurans)).